A 363-amino-acid polypeptide reads, in one-letter code: MIDDESVPWIEKYRPKKLEDITQSQNLLDLFKNSTKKGEMTHFLFYGPPGTGKTSAILAMGREIFKEHFQNRVIEFNASDDRGINAVREKITNEAKKYVAEIKLEDGTIIPSYKIIILDEADSMTDEAQDALRVIIEQYSTATRFCFICNYITKITDAIKSRCSSVYFKKLSDECMVEKLNDISLKESMELPKNILHTIIDVSNGDMRKAIMLLQNFKYTYNFKKNLTKKLKDMTLLELKTILFMTKKSSITSTISEEDVYEISASITLDKAKGIIDDTIDCNNIVEVSNLSKKIIAMGFPIDNILTQLNKCILESNKLDVNQISKIIIYSGDILLKMKECGNEYIQLLNYLAYVNRVSKHFD.

47 to 54 (GPPGTGKT) serves as a coordination point for ATP.

The protein belongs to the activator 1 small subunits family. RfcS subfamily.

Its function is as follows. Part of the RFC clamp loader complex which loads the PCNA sliding clamp onto DNA. The polypeptide is Putative replication factor C small subunit L510 (Acanthamoeba polyphaga mimivirus (APMV)).